The following is a 203-amino-acid chain: Glycerol-3-phosphate acyltransferase (203 aa).

4 helical membrane-spanning segments follow: residues 4 to 24 (LTFA…AVLI), 68 to 88 (IPVY…FIGI), 104 to 124 (GGKG…DMGS), and 125 to 145 (FMIV…LAAI).

The protein belongs to the PlsY family. As to quaternary structure, probably interacts with PlsX.

The protein localises to the cell inner membrane. The catalysed reaction is an acyl phosphate + sn-glycerol 3-phosphate = a 1-acyl-sn-glycero-3-phosphate + phosphate. It functions in the pathway lipid metabolism; phospholipid metabolism. In terms of biological role, catalyzes the transfer of an acyl group from acyl-phosphate (acyl-PO(4)) to glycerol-3-phosphate (G3P) to form lysophosphatidic acid (LPA). This enzyme utilizes acyl-phosphate as fatty acyl donor, but not acyl-CoA or acyl-ACP. In Tolumonas auensis (strain DSM 9187 / NBRC 110442 / TA 4), this protein is Glycerol-3-phosphate acyltransferase.